Here is a 520-residue protein sequence, read N- to C-terminus: Transactivator/viroplasmin protein (520 aa).

The disordered stretch occupies residues V486–D520.

It belongs to the caulimoviridae viroplasmin family.

It is found in the host cytoplasm. Enhances the ribosomal termination-reinitiation event leading to the translation of major open reading frames on the polycistronic viral RNAs. The chain is Transactivator/viroplasmin protein from Cauliflower mosaic virus (strain NY8153) (CaMV).